A 276-amino-acid polypeptide reads, in one-letter code: Triple specificity protein phosphatase PtpB (276 aa).

Residue Cys160 is the Phosphocysteine intermediate of the active site. Residues 232–250 are UIM-like region; the sequence is LGVRAEYLAAARQTIDETY.

It belongs to the protein-tyrosine phosphatase family. Interacts (via UIM-like region) with host ubiquitin; activating the phosphatidylinositol phosphate phosphatase activity.

Its subcellular location is the secreted. It is found in the host cytoplasm. It localises to the host cell membrane. It carries out the reaction O-phospho-L-tyrosyl-[protein] + H2O = L-tyrosyl-[protein] + phosphate. The enzyme catalyses O-phospho-L-seryl-[protein] + H2O = L-seryl-[protein] + phosphate. It catalyses the reaction O-phospho-L-threonyl-[protein] + H2O = L-threonyl-[protein] + phosphate. The catalysed reaction is 1,2-dioctanoyl-sn-glycero-3-phospho-(1-D-myo-inositol-3-phosphate) + H2O = 1,2-dioctanoyl-sn-glycero-3-phospho-(1D-myo-inositol) + phosphate. It carries out the reaction 1,2-dioctanoyl-sn-glycero-3-phospho-(1-D-myo-inositol-4-phosphate) + H2O = 1,2-dioctanoyl-sn-glycero-3-phospho-(1D-myo-inositol) + phosphate. The enzyme catalyses 1,2-dioctanoyl-sn-glycero-3-phospho-(1D-myo-inositol-5-phosphate) + H2O = 1,2-dioctanoyl-sn-glycero-3-phospho-(1D-myo-inositol) + phosphate. Binding to host ubiquitin is required to activate the phosphatidylinositol phosphate phosphatase activity. Phosphatase activity is inhibited by sodium orthovanadate, a specific inhibitor of tyrosine phosphatases, but not by okadaic acid, an inhibitor of serine/threonine phosphatases. Inhibition of the enzyme reduces mycobacterial survival in infected macrophages. Inhibitors also enhance killing efficacy by first-line antibiotics. Functionally, essential virulence factor that promotes mycobacterial survival within host macrophages. Acts as a phosphatase that possesses triple substrate specificity toward phosphotyrosine, phosphoserine/threonine and phosphoinositides. Supports mycobacteria survival during infection by modulating the normal host signaling pathways, attenuating the bactericidal immune responses and promoting the host cell survival. Inhibits host pyroptosis by disrupting the membrane localization of host gasdermin-D (GSDMD): acts by catalyzing dephosphorylation of phosphatidylinositol (4,5)-bisphosphate and phosphatidylinositol 4-phosphate, thereby inhibiting the membrane targeting of GSDMD and subsequent cytokine release and pyroptosis. Inhibits host inflammatory responses and apoptosis through impeding the NF-kappa-B and MAPK signal pathways and TP53/p53 expression in the macrophage. Blocks the IL6/IL-6 production by down-regulating ERK1/2, p38 and p65 activity. Prevents macrophage cell death by activating the Akt pathway and blocking caspase 3 activity. Reduces the expression of iNOS in activated macrophages and inhibits the generation of destroying reactive nitrogen intermediate NO. The sequence is that of Triple specificity protein phosphatase PtpB from Mycobacterium tuberculosis (strain ATCC 25618 / H37Rv).